Reading from the N-terminus, the 72-residue chain is Threonine dehydratase operon activator protein (72 aa).

In terms of biological role, probable trans-acting positive activator for the tdc operon. The chain is Threonine dehydratase operon activator protein (tdcR) from Escherichia coli (strain K12).